Consider the following 168-residue polypeptide: UPF0303 protein YE1367 (168 aa).

The protein belongs to the UPF0303 family.

In Yersinia enterocolitica serotype O:8 / biotype 1B (strain NCTC 13174 / 8081), this protein is UPF0303 protein YE1367.